The chain runs to 332 residues: D-alanine--D-alanine ligase (332 aa).

One can recognise an ATP-grasp domain in the interval Lys-124 to Asn-329. Ala-154 to Glu-209 contributes to the ATP binding site. Mg(2+)-binding residues include Asp-283, Glu-296, and Asn-298.

The protein belongs to the D-alanine--D-alanine ligase family. Requires Mg(2+) as cofactor. The cofactor is Mn(2+).

It localises to the cytoplasm. It catalyses the reaction 2 D-alanine + ATP = D-alanyl-D-alanine + ADP + phosphate + H(+). It participates in cell wall biogenesis; peptidoglycan biosynthesis. Its function is as follows. Cell wall formation. This is D-alanine--D-alanine ligase from Shewanella piezotolerans (strain WP3 / JCM 13877).